The primary structure comprises 464 residues: Argininosuccinate lyase (464 aa).

It belongs to the lyase 1 family. Argininosuccinate lyase subfamily.

The protein localises to the cytoplasm. It catalyses the reaction 2-(N(omega)-L-arginino)succinate = fumarate + L-arginine. The protein operates within amino-acid biosynthesis; L-arginine biosynthesis; L-arginine from L-ornithine and carbamoyl phosphate: step 3/3. In Pseudomonas syringae pv. tomato (strain ATCC BAA-871 / DC3000), this protein is Argininosuccinate lyase.